Reading from the N-terminus, the 117-residue chain is Large ribosomal subunit protein bL20 (117 aa).

Belongs to the bacterial ribosomal protein bL20 family.

Its function is as follows. Binds directly to 23S ribosomal RNA and is necessary for the in vitro assembly process of the 50S ribosomal subunit. It is not involved in the protein synthesizing functions of that subunit. The sequence is that of Large ribosomal subunit protein bL20 from Mannheimia succiniciproducens (strain KCTC 0769BP / MBEL55E).